The primary structure comprises 469 residues: Phenylalanine--tRNA ligase alpha subunit (469 aa).

Residues Thr309, 348-350, and Phe388 contribute to the L-phenylalanine site; that span reads QLD. Glu390 provides a ligand contact to Mg(2+).

This sequence belongs to the class-II aminoacyl-tRNA synthetase family. Phe-tRNA synthetase alpha subunit type 2 subfamily. As to quaternary structure, tetramer of two alpha and two beta subunits. The cofactor is Mg(2+).

It is found in the cytoplasm. The enzyme catalyses tRNA(Phe) + L-phenylalanine + ATP = L-phenylalanyl-tRNA(Phe) + AMP + diphosphate + H(+). The chain is Phenylalanine--tRNA ligase alpha subunit from Sulfurisphaera tokodaii (strain DSM 16993 / JCM 10545 / NBRC 100140 / 7) (Sulfolobus tokodaii).